Here is a 387-residue protein sequence, read N- to C-terminus: 3-ketoacyl-CoA thiolase (387 aa).

Residue cysteine 91 is the Acyl-thioester intermediate of the active site. Catalysis depends on proton acceptor residues histidine 343 and cysteine 373.

The protein belongs to the thiolase-like superfamily. Thiolase family. As to quaternary structure, heterotetramer of two alpha chains (FadB) and two beta chains (FadA).

It is found in the cytoplasm. It catalyses the reaction an acyl-CoA + acetyl-CoA = a 3-oxoacyl-CoA + CoA. It participates in lipid metabolism; fatty acid beta-oxidation. Its function is as follows. Catalyzes the final step of fatty acid oxidation in which acetyl-CoA is released and the CoA ester of a fatty acid two carbons shorter is formed. The chain is 3-ketoacyl-CoA thiolase from Shewanella loihica (strain ATCC BAA-1088 / PV-4).